The sequence spans 220 residues: Charged multivesicular body protein 2a (220 aa).

Coiled-coil stretches lie at residues 12–53 (EEML…MAKQ) and 199–220 (PSAALADADADLEERLNNLRRD). The tract at residues 179–208 (LSNLPSTGGSLSVAGAKKGEPSAALADADA) is disordered. The MIT-interacting motif signature appears at 208–218 (ADLEERLNNLR).

This sequence belongs to the SNF7 family. In terms of assembly, probable core component of the endosomal sorting required for transport complex III (ESCRT-III). ESCRT-III components are thought to multimerize to form a flat lattice on the perimeter membrane of the endosome.

Its subcellular location is the late endosome membrane. It is found in the cytoplasm. In terms of biological role, probable core component of the endosomal sorting required for transport complex III (ESCRT-III) which is involved in multivesicular bodies (MVBs) formation and sorting of endosomal cargo proteins into MVBs. MVBs contain intraluminal vesicles (ILVs) that are generated by invagination and scission from the limiting membrane of the endosome and mostly are delivered to lysosomes enabling degradation of membrane proteins, such as stimulated growth factor receptors, lysosomal enzymes and lipids. In Xenopus tropicalis (Western clawed frog), this protein is Charged multivesicular body protein 2a (chmp2a).